Consider the following 196-residue polypeptide: DNA replication complex GINS protein PSF1 (196 aa).

Belongs to the GINS1/PSF1 family. Component of the GINS complex which is a heterotetramer of gins1/psf1, gins2/psf2, gins3/psf3 and gins4/sld5. Component of the CMG helicase complex, composed of the mcm2-7 complex, the GINS complex and cdc45.

It is found in the nucleus. Its subcellular location is the chromosome. Required for correct functioning of the GINS complex, a complex that plays an essential role in the initiation of DNA replication, and progression of DNA replication forks. GINS complex is a core component of CDC45-MCM-GINS (CMG) helicase, the molecular machine that unwinds template DNA during replication, and around which the replisome is built. This Xenopus laevis (African clawed frog) protein is DNA replication complex GINS protein PSF1.